A 154-amino-acid polypeptide reads, in one-letter code: Vimentin (154 aa).

Over residues 1–13 (MSTRSVSSSSYRR) the composition is skewed to low complexity. The disordered stretch occupies residues 1–31 (MSTRSVSSSSYRRMFGGPGTASRPSSTRSYV). The residue at position 2 (Ser2) is an N-acetylserine. Positions 2-95 (STRSVSSSSY…FSLADAINTE (94 aa)) are head. Ser5 carries the post-translational modification Phosphoserine. Ser7 carries the phosphoserine; by PKA and PKC; alternate modification. O-linked (GlcNAc) serine; alternate glycosylation is present at Ser7. At Ser8 the chain carries Phosphoserine. A phosphoserine; by PKC mark is found at Ser9 and Ser10. Thr20 is modified (phosphothreonine). Ser25 bears the Phosphoserine; by PKA and PKC mark. Ser26 carries the post-translational modification Phosphoserine; by PKC. Thr33 is a glycosylation site (O-linked (GlcNAc) threonine). An O-linked (GlcNAc) serine; alternate glycan is attached at Ser34. Position 34 is a phosphoserine; by PKC; alternate (Ser34). A Phosphoserine; by CaMK2, PKA, PKC and ROCK2 modification is found at Ser39. Ser42 is modified (phosphoserine; by PKC). Phosphoserine is present on Ser49. At Tyr53 the chain carries Phosphotyrosine. Ser55 bears the Phosphoserine mark. Residue Ser56 is modified to Phosphoserine; by CDK5 and CDK1. Phosphotyrosine is present on Tyr61. Ser66 bears the Phosphoserine; by PKA and PKC mark. Ser72 carries the post-translational modification Phosphoserine; by AURKB and ROCK2. Ser83 bears the Phosphoserine; by CaMK2 mark. Ser87 carries the post-translational modification Phosphoserine. A coil 1A region spans residues 96-131 (FKNTRTNEKVELQELNDRFANYIDKVRFLEQQNKIL). Residues 96 to 131 (FKNTRTNEKVELQELNDRFANYIDKVRFLEQQNKIL) adopt a coiled-coil conformation. In terms of domain architecture, IF rod spans 103–154 (EKVELQELNDRFANYIDKVRFLEQQNKILLAELEQLKGQGKSRLGHLYEEEM). A Glycyl lysine isopeptide (Lys-Gly) (interchain with G-Cter in SUMO2) cross-link involves residue Lys104. Tyr117 carries the phosphotyrosine modification. 3 positions are modified to N6-acetyllysine; alternate: Lys120, Lys129, and Lys139. N6-succinyllysine; alternate is present on residues Lys120 and Lys129. Residues Lys120, Lys129, and Lys139 each participate in a glycyl lysine isopeptide (Lys-Gly) (interchain with G-Cter in SUMO2); alternate cross-link. Residues 132 to 153 (LAELEQLKGQGKSRLGHLYEEE) are linker 1. Ser144 is subject to Phosphoserine. Residue Met154 is a region of interest, coil 1B.

The protein belongs to the intermediate filament family. In terms of assembly, homomer assembled from elementary dimers. Identified in complexes that contain VIM, EZR, AHNAK, BFSP1, BFSP2, ANK2, PLEC, PRX and spectrin. Interacts with BCAS3. Interacts with LGSN. Interacts with SYNM. Interacts (via rod region) with PLEC (via CH 1 domain). Interacts with STK33. Interacts with LARP6. Interacts with RAB8B. Interacts with TOR1A; the interaction associates TOR1A with the cytoskeleton. Interacts with TOR1AIP1. Interacts with TOR1AIP1. Interacts with DIAPH1. Interacts with EPPK1; interaction is dependent of higher-order structure of intermediate filament. Interacts with the non-receptor tyrosine kinase SRMS; the interaction leads to phosphorylation of VIM. Interacts with NOD2. Interacts (via head region) with CORO1C. Interacts with HDGF. Interacts with PRKCE (via phorbol-ester/DAG-type 2 domain). Interacts with BFSP2. Interacts with PPL. Interacts with PKP1 and PKP2. Interacts with SCRIB (via PDZ domains); the interaction protects SCRIB from proteasomal degradation and facilitates SCRIB localization to intermediate filaments, the interaction is reduced by cell contact inhibition. In terms of processing, one of the most prominent phosphoproteins in various cells of mesenchymal origin. Phosphorylation is enhanced during cell division, at which time vimentin filaments are significantly reorganized. Phosphorylation by PKN1 inhibits the formation of filaments. Filament disassembly during mitosis is promoted by phosphorylation at Ser-55 as well as by nestin. Phosphorylated at Ser-56 by CDK5 during neutrophil secretion in the cytoplasm. Phosphorylated by STK33. Phosphorylated on tyrosine residues by SRMS.

Its subcellular location is the cytoplasm. It localises to the cytoskeleton. The protein localises to the nucleus matrix. It is found in the cell membrane. Vimentins are class-III intermediate filaments found in various non-epithelial cells, especially mesenchymal cells. Vimentin is attached to the nucleus, endoplasmic reticulum, and mitochondria, either laterally or terminally. Plays a role in cell directional movement, orientation, cell sheet organization and Golgi complex polarization at the cell migration front. Protects SCRIB from proteasomal degradation and facilitates its localization to intermediate filaments in a cell contact-mediated manner. Functionally, involved with LARP6 in the stabilization of type I collagen mRNAs for CO1A1 and CO1A2. This is Vimentin (VIM) from Ovis aries (Sheep).